The primary structure comprises 167 residues: MVSALREAPLIRVHSSPVSSPSVSGSRRPVSCLSSQSSALSQSGGGSTSAAGIEARSRALRRRWCPAGIILLALISLLSCLLPASEAKVYGRCELARVLHDFGLDGYRGYSLADWVCLAYFTSGFNTAAVDHEADGSTNNGIFQINSRRWCRNLTPNVPNVCQMYCS.

At 1–63 the chain is on the cytoplasmic side; that stretch reads MVSALREAPL…EARSRALRRR (63 aa). Residues 64-84 form a helical; Signal-anchor for type II membrane protein membrane-spanning segment; sequence WCPAGIILLALISLLSCLLPA. The Extracellular segment spans residues 85–167; the sequence is SEAKVYGRCE…VPNVCQMYCS (83 aa). Residues 88 to 167 form the C-type lysozyme domain; the sequence is KVYGRCELAR…VPNVCQMYCS (80 aa). Cysteines 151 and 166 form a disulfide.

Belongs to the glycosyl hydrolase 22 family. As to quaternary structure, interacts with ASTL. Post-translationally, the processed form derives from the membrane form by proteolytic processing.

It is found in the cytoplasmic vesicle. The protein localises to the secretory vesicle. It localises to the acrosome membrane. Functionally, sperm surface membrane protein that may be involved in sperm-egg plasma membrane adhesion and fusion during fertilization. It could be a potential receptor for the egg oligosaccharide residue N-acetylglucosamine, which is present in the extracellular matrix over the egg plasma membrane. The processed form has no detectable bacteriolytic activity in vitro. The protein is Sperm acrosome membrane-associated protein 3 (SPACA3) of Pongo pygmaeus (Bornean orangutan).